A 429-amino-acid polypeptide reads, in one-letter code: Growth/differentiation factor 2 (429 aa).

The N-terminal stretch at 1–22 (MCPGALWVALPLLSLLAGSLQG) is a signal peptide. Positions 23-319 (KPLQSWGRGS…AGSTLARRKR (297 aa)) are excised as a propeptide. N-linked (GlcNAc...) asparagine glycans are attached at residues Asn-71 and Asn-136. Over residues 283–301 (VLKKLSKDGSTEAGESSHE) the composition is skewed to basic and acidic residues. Positions 283-308 (VLKKLSKDGSTEAGESSHEEDTDGHV) are disordered. 3 disulfide bridges follow: Cys-327/Cys-393, Cys-356/Cys-426, and Cys-360/Cys-428. The interaction with ENG stretch occupies residues 402–416 (SVLYKDDMGVPTLKY).

This sequence belongs to the TGF-beta family. As to quaternary structure, homodimer; disulfide-linked. Detected in extracellular fluid as mature homodimer, and in complex with its propeptide. Interacts with ACVRL1, BMPR2 and ACVR2B with high affinity (in vitro). Identified in a complex with ACVRL1 and ACVR2B. Has ten times lower affinity for ACVR2A (in vitro). Interacts with ENG, forming a heterotetramer with a 2:2 stoichiometry. Can form a heteromeric complex with ENG and ACVRL1. Interacts with type I receptor ACVR1. Post-translationally, a reversible disulfide bond can be formed between the two subunits in the homodimer; this has no effect on GDF2 activity. As to expression, detected in blood plasma (at protein level).

It localises to the secreted. Potent circulating inhibitor of angiogenesis. Signals through the type I activin receptor ACVRL1 but not other Alks. Signaling through SMAD1 in endothelial cells requires TGF-beta coreceptor endoglin/ENG. This Homo sapiens (Human) protein is Growth/differentiation factor 2 (GDF2).